The chain runs to 259 residues: Tryptophan synthase alpha chain (259 aa).

Residues Glu52 and Asp63 each act as proton acceptor in the active site.

It belongs to the TrpA family. As to quaternary structure, tetramer of two alpha and two beta chains.

It catalyses the reaction (1S,2R)-1-C-(indol-3-yl)glycerol 3-phosphate + L-serine = D-glyceraldehyde 3-phosphate + L-tryptophan + H2O. It functions in the pathway amino-acid biosynthesis; L-tryptophan biosynthesis; L-tryptophan from chorismate: step 5/5. Its function is as follows. The alpha subunit is responsible for the aldol cleavage of indoleglycerol phosphate to indole and glyceraldehyde 3-phosphate. The chain is Tryptophan synthase alpha chain from Streptococcus sanguinis (strain SK36).